A 387-amino-acid polypeptide reads, in one-letter code: F-box protein DOR (387 aa).

An F-box domain is found at 19–64; the sequence is DENFEPIPIDLVIEIFSRSPVKSIARCRCVSKLWASILRLPYFTEL.

As to quaternary structure, part of a SCF (ASK-cullin-F-box) protein ligase complex. Interacts with ASK14 and CUL1. Strongly expressed in guard cells. Mostly represented in seedlings, leaves and flowers, and, to a lower extent, in roots and siliques.

It functions in the pathway protein modification; protein ubiquitination. Functionally, component of SCF(ASK-cullin-F-box) E3 ubiquitin ligase complexes, which may mediate the ubiquitination and subsequent proteasomal degradation of target proteins. Negative regulator of guard cell abscisic acid (ABA) signaling, especially during drought stress. This chain is F-box protein DOR (DOR), found in Arabidopsis thaliana (Mouse-ear cress).